The primary structure comprises 75 residues: Large ribosomal subunit protein uL29 (75 aa).

The protein belongs to the universal ribosomal protein uL29 family.

In Ureaplasma urealyticum serovar 10 (strain ATCC 33699 / Western), this protein is Large ribosomal subunit protein uL29.